The sequence spans 453 residues: MHAHVILAAGQGTRMRSRLPKVLHPLLGKPMLLYALEAALALKPERLVVVVGHGGEKVVEALEGYPVEVAWQKEQLGTAHALLQAEGLLRDFPGPFLVTQGDTPLLSPRTLEALLRRVREGAGMALLTAELPDPTGYGRILREGEEVLGNVEEKDAPPEVRAIREVNAGAYAFDGFLFQALKEVRNENAAREYYLPDLIAIYRAHGRRVLAVRGVAEEALGVNTREELARVEGVLLRRLRAEWMGKGVRMILPETIYLEPSVELAPDVTLWPGAVLKGKTRIGEGCEVGPYAVLEDTVLEPGAKVLAHTVAQGAHLHPGASAGPFARLRPGAVLMEEVHVGNFVEVKNSLLHKGVKAGHLAYLGDAEVGEGTNIGAGVITANYDGKRKHKTEIGKKAFIGSNSVLVAPVRVGDRALVGAGSVITQDVPEGALAVARERQKNLEGYALRKLGEG.

A pyrophosphorylase region spans residues 1–225; the sequence is MHAHVILAAG…AEEALGVNTR (225 aa). UDP-N-acetyl-alpha-D-glucosamine is bound by residues 7 to 10, Lys21, Gln72, and 77 to 78; these read LAAG and GT. Asp102 is a binding site for Mg(2+). Residues Gly138, Glu152, Asn167, and Asn223 each contribute to the UDP-N-acetyl-alpha-D-glucosamine site. Mg(2+) is bound at residue Asn223. The linker stretch occupies residues 226–246; sequence EELARVEGVLLRRLRAEWMGK. An N-acetyltransferase region spans residues 247–453; the sequence is GVRMILPETI…GYALRKLGEG (207 aa). UDP-N-acetyl-alpha-D-glucosamine contacts are provided by Arg329 and Lys347. His359 serves as the catalytic Proton acceptor. Tyr362 and Asn373 together coordinate UDP-N-acetyl-alpha-D-glucosamine. Residues Ala376, 382-383, Ser401, Ala419, and Arg436 contribute to the acetyl-CoA site; that span reads NY.

In the N-terminal section; belongs to the N-acetylglucosamine-1-phosphate uridyltransferase family. The protein in the C-terminal section; belongs to the transferase hexapeptide repeat family. As to quaternary structure, homotrimer. It depends on Mg(2+) as a cofactor.

It is found in the cytoplasm. The enzyme catalyses alpha-D-glucosamine 1-phosphate + acetyl-CoA = N-acetyl-alpha-D-glucosamine 1-phosphate + CoA + H(+). It carries out the reaction N-acetyl-alpha-D-glucosamine 1-phosphate + UTP + H(+) = UDP-N-acetyl-alpha-D-glucosamine + diphosphate. It participates in nucleotide-sugar biosynthesis; UDP-N-acetyl-alpha-D-glucosamine biosynthesis; N-acetyl-alpha-D-glucosamine 1-phosphate from alpha-D-glucosamine 6-phosphate (route II): step 2/2. It functions in the pathway nucleotide-sugar biosynthesis; UDP-N-acetyl-alpha-D-glucosamine biosynthesis; UDP-N-acetyl-alpha-D-glucosamine from N-acetyl-alpha-D-glucosamine 1-phosphate: step 1/1. The protein operates within bacterial outer membrane biogenesis; LPS lipid A biosynthesis. Functionally, catalyzes the last two sequential reactions in the de novo biosynthetic pathway for UDP-N-acetylglucosamine (UDP-GlcNAc). The C-terminal domain catalyzes the transfer of acetyl group from acetyl coenzyme A to glucosamine-1-phosphate (GlcN-1-P) to produce N-acetylglucosamine-1-phosphate (GlcNAc-1-P), which is converted into UDP-GlcNAc by the transfer of uridine 5-monophosphate (from uridine 5-triphosphate), a reaction catalyzed by the N-terminal domain. This chain is Bifunctional protein GlmU, found in Thermus thermophilus (strain ATCC 27634 / DSM 579 / HB8).